The primary structure comprises 210 residues: TBC1 domain family member 28 (210 aa).

Residues Val-101–Ser-210 form the Rab-GAP TBC domain.

This chain is TBC1 domain family member 28 (TBC1D28), found in Homo sapiens (Human).